The primary structure comprises 471 residues: RuvB-like protein 2 (471 aa).

ATP is bound at residue 75–82; sequence GPPSTGKT.

Belongs to the RuvB family. In terms of assembly, probably forms a homohexamer. Interacts with RVB1 and may form heterododecamers with RVB1. Component of the SWR1 chromatin remodeling complex composed of at least ACT1, ARP4, RVB1, RVB2, ARP6, YAF9, VPS71, VPS72, SWC3, SWC4, SWC5, SWC7 and SWR1, and perhaps BDF1. Component of the chromatin-remodeling INO80 complex, at least composed of ARP4, ARP5, ARP8, RVB1, RVB2, TAF14, NHP10, IES1, IES3, IES4, IES6, ACT1, IES2, IES5 and INO80. Also belongs to the R2TP complex composed of at least RVB1, RVB2, TAH1 and PIH1. Interacts with SPT15/TBP.

Its subcellular location is the nucleus. It localises to the nucleoplasm. The catalysed reaction is ATP + H2O = ADP + phosphate + H(+). In terms of biological role, DNA helicase which participates in several chromatin remodeling complexes, including the SWR1 and the INO80 complexes. The SWR1 complex mediates the ATP-dependent exchange of histone H2A for the H2A variant HZT1 leading to transcriptional regulation of selected genes by chromatin remodeling. The INO80 complex remodels chromatin by shifting nucleosomes. Its ability to induce transcription of some phosphate-responsive genes is modulated by inositol polyphosphates. The INO80 complex is involved in DNA repair by associating to 'Ser-129' phosphorylated H2A histones as a response to DNA damage. During transcription may recruit SPT15/TBP to the TATA-boxes of involved genes. Required for box C/D and box H/ACA snoRNA accumulation and involved in pre-rRNA processing. This chain is RuvB-like protein 2 (RVB2), found in Saccharomyces cerevisiae (strain ATCC 204508 / S288c) (Baker's yeast).